A 443-amino-acid polypeptide reads, in one-letter code: Magnesium transporter MRS2-10 (443 aa).

The tract at residues Met1–Gln33 is disordered. A run of 2 helical transmembrane segments spans residues Leu379–Gly399 and Trp415–Tyr435. A Required for magnesium transport activity motif is present at residues Gly399–Asn401.

The protein belongs to the CorA metal ion transporter (MIT) (TC 1.A.35.5) family. As to expression, expressed in the whole plant.

It is found in the cell membrane. Its function is as follows. High-affinity magnesium transporter that mediates the influx of magnesium. Involved in tolerance to Aluminum. The chain is Magnesium transporter MRS2-10 (MRS2-10) from Arabidopsis thaliana (Mouse-ear cress).